A 258-amino-acid polypeptide reads, in one-letter code: Uroplakin-1a (258 aa).

Topologically, residues 1 to 14 (MASAAAAEAEKGSP) are cytoplasmic. A helical membrane pass occupies residues 15–35 (VVVGLLVVGNIIILLSGLSLF). Residues 36-59 (AETIWVTADQYRVYPLMGVSGKDD) are Extracellular-facing. Residues 60–86 (VFAGAWIAIFCGFSFFMVASFGVGAAL) form a helical membrane-spanning segment. The Cytoplasmic segment spans residues 87 to 91 (CRRRS). A helical transmembrane segment spans residues 92–112 (MVLTYLVLMLIVYIFECASCI). Residues 113 to 230 (TSYTHRDYMV…HIGHAIDSYT (118 aa)) lie on the Extracellular side of the membrane. N-linked (GlcNAc...) asparagine glycosylation occurs at asparagine 170. A helical membrane pass occupies residues 231 to 252 (WGISWFGFAILMWTLPVMLIAM). The Cytoplasmic portion of the chain corresponds to 253-258 (YFYTML).

It belongs to the tetraspanin (TM4SF) family. As to quaternary structure, homodimer; disulfide-linked. Interacts with uroplakin-2 (UPK2). In terms of tissue distribution, high expression restricted to ureteric urothelium (most superficial cells); low expression in prostate. Expression in normal urothelial cells is lost in culture. Some expression in tumor cell lines derived from urothelial malignancies.

The protein localises to the membrane. Its function is as follows. Component of the asymmetric unit membrane (AUM); a highly specialized biomembrane elaborated by terminally differentiated urothelial cells. May play an important role in normal bladder epithelial physiology, possibly in regulating membrane permeability of superficial umbrella cells or in stabilizing the apical membrane through AUM/cytoskeletal interactions. The polypeptide is Uroplakin-1a (UPK1A) (Homo sapiens (Human)).